Consider the following 812-residue polypeptide: Fibroblast growth factor receptor 1 (812 aa).

The signal sequence occupies residues 1 to 20 (MFSGMSLLLWGVLLGAALSV). The Extracellular segment spans residues 21 to 371 (ARPPSTLPDE…PALLASPLQL (351 aa)). The Ig-like C2-type 1 domain occupies 25-118 (STLPDEVAPK…YTVLCSVNVS (94 aa)). Cysteines 54 and 100 form a disulfide. 9 N-linked (GlcNAc...) asparagine glycosylation sites follow: N76, N116, N133, N223, N236, N260, N292, N313, and N326. The disordered stretch occupies residues 121–153 (LPSAEDDDEDDDNSSSEEKAAENSKPNRPLWSH). The segment covering 124-135 (AEDDDEDDDNSS) has biased composition (acidic residues). Ig-like C2-type domains lie at 154–242 (PEKM…YQLD) and 251–353 (PILQ…AWLT). A disulfide bridge links C174 with C226. Cysteines 273 and 337 form a disulfide. The chain crosses the membrane as a helical span at residues 372–393 (EIIIYCTGAAFVSAMVVTIIIF). Topologically, residues 394–812 (KMKHPSKKSD…KYSNGGLKKR (419 aa)) are cytoplasmic. Y457 is subject to Phosphotyrosine; by autocatalysis. The Protein kinase domain occupies 472–761 (LILGKPLGEG…LALSSNQEYL (290 aa)). ATP contacts are provided by residues 478–484 (LGEGCFG), K508, 556–558 (EYT), and N562. A phosphotyrosine; by autocatalysis mark is found at Y577 and Y579. Residue D617 is the Proton acceptor of the active site. 2 residues coordinate ATP: R621 and D635. Phosphotyrosine; by autocatalysis is present on residues Y647, Y648, Y724, and Y760. Residues 784 to 812 (SGEDSMFSHDPLPDEPCLPKYSNGGLKKR) are disordered.

This sequence belongs to the protein kinase superfamily. Tyr protein kinase family. Fibroblast growth factor receptor subfamily. As to quaternary structure, monomer. Homodimer after ligand binding. Interacts with il17rd. Autophosphorylated. Binding of FGF family members together with heparan sulfate proteoglycan or heparin promotes receptor dimerization and autophosphorylation on tyrosine residues. Autophosphorylation occurs in trans between the two FGFR molecules present in the dimer and proceeds in a highly ordered manner. Phosphotyrosine residues provide docking sites for interacting proteins and so are crucial for FGFR1 function and its regulation. Post-translationally, ubiquitinated. FGFR1 is rapidly ubiquitinated after autophosphorylation, leading to internalization and degradation. In terms of processing, N-glycosylated in the endoplasmic reticulum. The N-glycan chains undergo further maturation to an Endo H-resistant form in the Golgi apparatus.

The protein resides in the cell membrane. Its subcellular location is the nucleus. It localises to the cytoplasm. The protein localises to the cytosol. It is found in the cytoplasmic vesicle. The catalysed reaction is L-tyrosyl-[protein] + ATP = O-phospho-L-tyrosyl-[protein] + ADP + H(+). Its activity is regulated as follows. Present in an inactive conformation in the absence of bound ligand. Ligand binding leads to dimerization and activation by sequential autophosphorylation on tyrosine residues. In terms of biological role, tyrosine-protein kinase that acts as a cell-surface receptor for fibroblast growth factors and plays an essential role in the regulation of embryonic development, cell proliferation, differentiation and migration. Required for normal mesoderm patterning and normal skeletogenesis. Phosphorylates PLCG1, FRS2, GAB1 and SHB. Ligand binding leads to the activation of several signaling cascades. Activation of PLCG1 leads to the production of the cellular signaling molecules diacylglycerol and inositol-1,4,5-trisphosphate. Phosphorylation of FRS2 triggers recruitment of GRB2, GAB1, PIK3R1 and SOS1, and mediates activation of RAS, MAPK1/ERK2, MAPK3/ERK1 and the MAP kinase signaling pathway, as well as of the AKT1 signaling pathway. Promotes phosphorylation of SHC1, STAT1 and PTPN11/SHP2. In the nucleus, enhances RPS6KA1 and CREB1 activity and contributes to the regulation of transcription. FGFR1 signaling is down-regulated by ubiquitination, internalization and degradation. The sequence is that of Fibroblast growth factor receptor 1 (fgfr1) from Xenopus laevis (African clawed frog).